The chain runs to 409 residues: Gamma-glutamyl phosphate reductase (409 aa).

It belongs to the gamma-glutamyl phosphate reductase family.

The protein resides in the cytoplasm. The catalysed reaction is L-glutamate 5-semialdehyde + phosphate + NADP(+) = L-glutamyl 5-phosphate + NADPH + H(+). It participates in amino-acid biosynthesis; L-proline biosynthesis; L-glutamate 5-semialdehyde from L-glutamate: step 2/2. In terms of biological role, catalyzes the NADPH-dependent reduction of L-glutamate 5-phosphate into L-glutamate 5-semialdehyde and phosphate. The product spontaneously undergoes cyclization to form 1-pyrroline-5-carboxylate. The protein is Gamma-glutamyl phosphate reductase of Mycobacterium leprae (strain TN).